A 595-amino-acid chain; its full sequence is UvrABC system protein C (595 aa).

The GIY-YIG domain occupies 17-94; the sequence is FEPGCYLMKD…IKQYQPRYNI (78 aa). Residues 199–234 form the UVR domain; sequence KTIIKNLESRMQAASENLEFEQAKEYRDLIQNIHNL.

This sequence belongs to the UvrC family. In terms of assembly, interacts with UvrB in an incision complex.

It localises to the cytoplasm. In terms of biological role, the UvrABC repair system catalyzes the recognition and processing of DNA lesions. UvrC both incises the 5' and 3' sides of the lesion. The N-terminal half is responsible for the 3' incision and the C-terminal half is responsible for the 5' incision. This Staphylococcus carnosus (strain TM300) protein is UvrABC system protein C.